We begin with the raw amino-acid sequence, 234 residues long: uncharacterized protein (234 aa).

Residue 68 to 70 (GES) participates in L-glutamine binding. C101 serves as the catalytic Nucleophile. L-glutamine contacts are provided by residues R131 and 167–168 (IR). Active-site charge relay system residues include H208 and E210.

The protein belongs to the glutaminase PdxT/SNO family.

Its subcellular location is the cytoplasm. It catalyses the reaction L-glutamine + H2O = L-glutamate + NH4(+). This is an uncharacterized protein from Schizosaccharomyces pombe (strain 972 / ATCC 24843) (Fission yeast).